The primary structure comprises 284 residues: Alpha-S1-casein (284 aa).

Residues 1–15 (MKLLILTCLVAAALA) form the signal peptide. Disordered stretches follow at residues 21–44 (RRNA…IVKQ) and 78–111 (SSAE…SATE). Low complexity-rich tracts occupy residues 24 to 36 (AVSS…NSSS) and 78 to 99 (SSAE…SSSS). 8 positions are modified to phosphoserine: Ser-79, Ser-93, Ser-94, Ser-95, Ser-96, Ser-97, Ser-98, and Ser-99. A run of 10 repeats spans residues 138-143 (LLQQAS), 144-149 (LAQQAS), 150-155 (LAQQAS), 156-161 (LAQQAL), 162-167 (LAQQPS), 168-173 (LAQQAA), 174-179 (LAQQAS), 180-185 (LAQQAS), 186-191 (LAQQAS), and 192-197 (LAQKHH). Positions 138 to 197 (LLQQASLAQQASLAQQASLAQQALLAQQPSLAQQAALAQQASLAQQASLAQQASLAQKHH) are 10 X 6 AA tandem repeats.

It belongs to the alpha-casein family. As to expression, mammary gland specific. Secreted in milk.

It localises to the secreted. In terms of biological role, important role in the capacity of milk to transport calcium phosphate. The protein is Alpha-S1-casein (Csn1s1) of Rattus norvegicus (Rat).